A 93-amino-acid polypeptide reads, in one-letter code: RNA-binding protein Hfq (93 aa).

The Sm domain occupies 9 to 68 (DPYLNALRRERIPVSIYLVNGIKLQGQIESFDQFVILLKNTVSQMVYKHAISTVVPARAI). The segment covering 70 to 81 (HNNNSNHAHQAA) has biased composition (low complexity). The tract at residues 70–93 (HNNNSNHAHQAAPVQSAEVVEKVE) is disordered.

The protein belongs to the Hfq family. As to quaternary structure, homohexamer.

Functionally, RNA chaperone that binds small regulatory RNA (sRNAs) and mRNAs to facilitate mRNA translational regulation in response to envelope stress, environmental stress and changes in metabolite concentrations. Also binds with high specificity to tRNAs. The protein is RNA-binding protein Hfq of Glaesserella parasuis serovar 5 (strain SH0165) (Haemophilus parasuis).